Reading from the N-terminus, the 631-residue chain is MSAEVRLRQLQQLVLDPGFLGLEPLLDLLLGVHQELGASHLAQDKYVADFLQWVEPIAARLKEVRLQRDDFEILKVIGRGAFSEVAVVKMKQTGQVYAMKIMNKWDMLKRGEVSCFREERDVLVKGDRRWITQLHFAFQDENYLYLVMEYYVGGDLLTLLSKFGERIPAEMARFYLAEIVMAIDSVHRLGYVHRDIKPDNILLDRCGHIRLADFGSCLKLQPDGMVRSLVAVGTPDYLSPEILQAVGGGPGAGSYGPECDWWALGVFAYEMFYGQTPFYADSTAETYAKIVHYREHLSLPLADTVVPEEAQDLIRGLLCPAEIRLGRGGAGDFQKHPFFFGLDWEGLRDSVPPFTPDFEGATDTCNFDVVEDRLTAMVSGGGETLSDMQEDMPLGVRLPFVGYSYCCMAFRDNQVPDPTPMELEALQLPVSDLQGLDLQPPVSPPDQVAEEADLVAVPAPVAEAETTVTLQQLQEALEEEVLTRQSLSRELEAIRTANQNFSSQLQEAEVRNRDLEAHVRQLQERMEMLQAPGAAAITGVPSPRATDPPSHLDGPPAVAVGQCPLVGPGPMHRRHLLLPARIPRPGLSEARCLLLFAAALAAAATLGCTGLVAYTGGLTPVWCFPGATFAP.

At M1 to C592 the chain is on the cytoplasmic side. Positions F71–F339 constitute a Protein kinase domain. ATP is bound by residues I77 to V85 and K100. Residue D195 is the Proton acceptor of the active site. S216 and S228 each carry phosphoserine; by autocatalysis. Position 234 is a phosphothreonine; by autocatalysis (T234). Residues F340–V415 enclose the AGC-kinase C-terminal domain. The stretch at A464 to P532 forms a coiled coil. A helical; Anchor for type IV membrane protein transmembrane segment spans residues L593–A613. Topologically, residues Y614–P631 are lumenal.

Belongs to the protein kinase superfamily. AGC Ser/Thr protein kinase family. DMPK subfamily. As to quaternary structure, homodimer; homodimerization stimulates the kinase activity. Interacts with HSPB2; may enhance DMPK kinase activity. Interacts with PLN; phosphorylates PLN. May interact with RAC1; may regulate DMPK kinase activity. Interacts with LMNA; may regulate nuclear envelope stability. It depends on Mg(2+) as a cofactor. Phosphorylated. Autophosphorylates. Phosphorylation by RAF1 may result in activation of DMPK. Post-translationally, proteolytic processing of the C-terminus may remove the transmembrane domain and release the kinase from membranes stimulating its activity. In terms of tissue distribution, expressed in all tissues tested, with a predominance in brain, skeletal muscle, heart, and other tissues containing smooth muscle. In the heart, expression is restricted to the cardiomyocytes in the ventricle and atrium.

The protein localises to the sarcoplasmic reticulum membrane. The protein resides in the cell membrane. Its subcellular location is the endoplasmic reticulum membrane. It localises to the nucleus outer membrane. It is found in the mitochondrion outer membrane. The protein localises to the cytoplasm. The protein resides in the cytosol. The catalysed reaction is L-seryl-[protein] + ATP = O-phospho-L-seryl-[protein] + ADP + H(+). It catalyses the reaction L-threonyl-[protein] + ATP = O-phospho-L-threonyl-[protein] + ADP + H(+). With respect to regulation, coiled-coil-mediated oligomerization enhances the catalytic activity. Proteolytic processing of the C-terminus may release the protein from membranes and constitute a mean to regulate the enzyme. May be regulated by HSPB2, RAC1, RAF1 and G-protein second messengers. Non-receptor serine/threonine protein kinase which is necessary for the maintenance of skeletal muscle structure and function. May play a role in myocyte differentiation and survival by regulating the integrity of the nuclear envelope and the expression of muscle-specific genes. May also phosphorylate PPP1R12A and inhibit the myosin phosphatase activity to regulate myosin phosphorylation. Also critical to the modulation of cardiac contractility and to the maintenance of proper cardiac conduction activity probably through the regulation of cellular calcium homeostasis. Phosphorylates PLN, a regulator of calcium pumps and may regulate sarcoplasmic reticulum calcium uptake in myocytes. May also phosphorylate FXYD1/PLM which is able to induce chloride currents. May also play a role in synaptic plasticity. This is Myotonin-protein kinase (Dmpk) from Mus musculus (Mouse).